The chain runs to 108 residues: uncharacterized protein (108 aa).

The helical transmembrane segment at 25–45 (VILKSFLLISSWVILVLLLVI) threads the bilayer.

It is found in the membrane. This is an uncharacterized protein from Saccharomyces cerevisiae (strain ATCC 204508 / S288c) (Baker's yeast).